The sequence spans 473 residues: Anthocyanidin-3-O-glucoside rhamnosyltransferase (473 aa).

Belongs to the UDP-glycosyltransferase family. As to expression, expressed in petals, styles and anthers.

It participates in pigment biosynthesis; anthocyanin biosynthesis. Functionally, controls the rhamnosylation of reddish anthocyanidin-3-O-glucosides, which is the first step in a series of modifications that finally yield magenta or blue/purple coloured anthocyanins. Controls the conversion of anthocyanidin-3-O-glucosides to anthocyanidin-3-O-rutinosides. In Petunia hybrida (Petunia), this protein is Anthocyanidin-3-O-glucoside rhamnosyltransferase.